We begin with the raw amino-acid sequence, 484 residues long: Protein nucleotidyltransferase YdiU (484 aa).

ATP contacts are provided by Gly-81, Gly-83, Arg-84, Lys-103, Asp-115, Gly-116, Arg-166, and Arg-173. The active-site Proton acceptor is Asp-244. Mg(2+) contacts are provided by Asn-245 and Asp-254. Residue Asp-254 participates in ATP binding.

Belongs to the SELO family. The cofactor is Mg(2+). It depends on Mn(2+) as a cofactor.

It carries out the reaction L-seryl-[protein] + ATP = 3-O-(5'-adenylyl)-L-seryl-[protein] + diphosphate. It catalyses the reaction L-threonyl-[protein] + ATP = 3-O-(5'-adenylyl)-L-threonyl-[protein] + diphosphate. The enzyme catalyses L-tyrosyl-[protein] + ATP = O-(5'-adenylyl)-L-tyrosyl-[protein] + diphosphate. The catalysed reaction is L-histidyl-[protein] + UTP = N(tele)-(5'-uridylyl)-L-histidyl-[protein] + diphosphate. It carries out the reaction L-seryl-[protein] + UTP = O-(5'-uridylyl)-L-seryl-[protein] + diphosphate. It catalyses the reaction L-tyrosyl-[protein] + UTP = O-(5'-uridylyl)-L-tyrosyl-[protein] + diphosphate. Nucleotidyltransferase involved in the post-translational modification of proteins. It can catalyze the addition of adenosine monophosphate (AMP) or uridine monophosphate (UMP) to a protein, resulting in modifications known as AMPylation and UMPylation. The protein is Protein nucleotidyltransferase YdiU of Shewanella baltica (strain OS155 / ATCC BAA-1091).